The sequence spans 78 residues: Translational regulator CsrA (78 aa).

The protein belongs to the CsrA/RsmA family. As to quaternary structure, homodimer; the beta-strands of each monomer intercalate to form a hydrophobic core, while the alpha-helices form wings that extend away from the core.

The protein localises to the cytoplasm. A translational regulator that binds mRNA to regulate translation initiation and/or mRNA stability. Usually binds in the 5'-UTR at or near the Shine-Dalgarno sequence preventing ribosome-binding, thus repressing translation. Its main target seems to be the major flagellin gene, while its function is anatagonized by FliW. The polypeptide is Translational regulator CsrA (Oleidesulfovibrio alaskensis (strain ATCC BAA-1058 / DSM 17464 / G20) (Desulfovibrio alaskensis)).